Consider the following 485-residue polypeptide: MSSPLASLSKTRKVPLESEPVNPGRRGIRIYGDEDEVDMVNDGQDSEEKISLPSCYGGIGRQGLMIHDSELLTSMARKLQELEQQLKARNEEMLSKEQKILALEDLVQTLQQHQSSTTREEELETQCIQLQRQVGEMERFLNDYGLQWVGEPMDQENSEGKIISESDERDWMKAKKFWKPGDSIVPPEVDFDRLLSSLQDLSELVVEGEAQVTPVPGGAQFRTLEPIPLKLYRNGIMMFDGPFRPFYDPYTQRCLRDILDGFFPSELQRLYPDGVPFKVSDLRNQVYPEDGLGPFPGEGRVVGRQKIRKVTDRVEETSGSRMTAEKFLNRLPKCVIRQGEVIDIRGPIRDTLQNCCPMPVRIQEIIVETPALASERQRTQESPNMPVPPLSMLRIKSENGEQAFLLMMRPEDTIGDVRNLLAQARDMDSAAFEILSTFPPTVYRDDTVTLQAAGLVPNATLLLRTRRVLPANPSFGTDSGPGSLP.

The disordered stretch occupies residues 1–26 (MSSPLASLSKTRKVPLESEPVNPGRR). A coiled-coil region spans residues 67–143 (HDSELLTSMA…VGEMERFLND (77 aa)). An SEP domain is found at 224-288 (LEPIPLKLYR…VSDLRNQVYP (65 aa)). One can recognise a UBX domain in the interval 386–463 (PVPPLSMLRI…GLVPNATLLL (78 aa)). 2 positions are modified to phosphoserine: S479 and S483.

Interacts with GNA12, GNA13, RND1, RND2 and RND3. As to expression, strongly expressed in testis. Also expressed in lung, brain and thymus.

The protein localises to the cytoplasm. The protein resides in the cytoskeleton. Functionally, may be involved in the reorganization of actin cytoskeleton mediated by RND1, RND2 and RND3. Promotes RHOA activation mediated by GNA12 and GNA13. This chain is UBX domain-containing protein 11 (Ubxn11), found in Rattus norvegicus (Rat).